Consider the following 760-residue polypeptide: BMP/retinoic acid-inducible neural-specific protein 1 (760 aa).

An N-terminal signal peptide occupies residues 1-16 (MNWRFVELLYFLFVWG). Residues 68–251 (RYKIYREFAR…FVQSALSYIM (184 aa)) form the MACPF domain. Residues asparagine 156, asparagine 433, asparagine 443, asparagine 553, asparagine 599, asparagine 630, and asparagine 676 are each glycosylated (N-linked (GlcNAc...) asparagine).

This sequence belongs to the BRINP family.

It is found in the cytoplasm. Functionally, plays a role in neurogenesis and brain development. May suppress cell cycle progression in postmitotic neurons by inhibiting G1/S transition. The polypeptide is BMP/retinoic acid-inducible neural-specific protein 1 (Brinp1) (Rattus norvegicus (Rat)).